A 1102-amino-acid chain; its full sequence is Centrosomal protein of 128 kDa (1102 aa).

Residues Ser31, Ser248, and Ser290 each carry the phosphoserine modification. Coiled coils occupy residues 215 to 822 and 878 to 959; these read VSDR…LETE and EELK…ALQM. The disordered stretch occupies residues 326–346; sequence QHQVPCISKQPLSHQDDQGDD. 2 disordered regions span residues 991 to 1048 and 1070 to 1102; these read SEKT…DHSR and DPAS…KYKK. The segment covering 1009–1027 has biased composition (basic and acidic residues); sequence QQRRDDTKPRIKSFRDDRP. 2 stretches are compositionally biased toward polar residues: residues 1039 to 1048 and 1076 to 1089; these read HSSSCQDHSR and GDTT…TSPQ. Residues 1090–1102 are compositionally biased toward basic and acidic residues; the sequence is SKKEEHEIKKYKK.

The protein localises to the cytoplasm. It localises to the cytoskeleton. The protein resides in the microtubule organizing center. Its subcellular location is the centrosome. It is found in the centriole. The protein localises to the spindle pole. The polypeptide is Centrosomal protein of 128 kDa (Cep128) (Mus musculus (Mouse)).